The primary structure comprises 833 residues: CUB domain-containing protein 1 (833 aa).

Residues 1 to 29 (MAHSACGFSVALLGALLLGTARLLRGTEA) form the signal peptide. Residues 30–666 (SEIALPQRSG…VTLTPRTVDL (637 aa)) are Extracellular-facing. N-linked (GlcNAc...) asparagine glycosylation is found at N122, N180, N205, N270, N310, N342, and N386. Residues 417–540 (CLDHRYCYRQ…QGLIVSYTPY (124 aa)) form the CUB domain. C476 and C499 are disulfide-bonded. A helical transmembrane segment spans residues 667-687 (AVVIGAAGGGALLLFALVLII). At 688–833 (CFVKKKKKVD…HTQGPVETEE (146 aa)) the chain is on the cytoplasmic side. Residue Y731 is modified to Phosphotyrosine. Positions 783–833 (AKFTAEELAPSSPPESESEPYTFSHPNKGEIGVRETDIPLLHTQGPVETEE) are disordered. Over residues 809–819 (NKGEIGVRETD) the composition is skewed to basic and acidic residues.

In terms of assembly, interacts with CDH2/N-cadherin, CDH3/P-cadherin, SDC1/syndecan-1, SDC4/syndecan-4 and the serine protease ST14/MT-SP1. Also interacts SRC and PRKCG/protein kinase C gamma. Post-translationally, phosphorylated on tyrosine by kinases of the SRC family such as SRC and YES as well as by the protein kinase C gamma/PRKCG. Dephosphorylated by phosphotyrosine phosphatases. Also phosphorylated by suramin, a heparin analog. Tyrosine phosphorylated in response to dissociation of integrin alpha-6 beta-4 from laminin-5. In terms of processing, N-glycosylated. A soluble form may also be produced by proteolytic cleavage at the cell surface (shedding). Another peptide of 80 kDa (p80) is present in cultured keratinocytes probably due to tryptic cleavage at an unidentified site on the N-terminal side. Converted to p80 by plasmin, a trypsin-like protease.

It localises to the cell membrane. May be involved in cell adhesion and cell matrix association. May play a role in the regulation of anchorage versus migration or proliferation versus differentiation via its phosphorylation. May be a novel marker for leukemia diagnosis and for immature hematopoietic stem cell subsets. Belongs to the tetraspanin web involved in tumor progression and metastasis. The polypeptide is CUB domain-containing protein 1 (Cdcp1) (Mus musculus (Mouse)).